A 341-amino-acid chain; its full sequence is L-threonine 3-dehydrogenase (341 aa).

Position 38 (cysteine 38) interacts with Zn(2+). Active-site charge relay system residues include threonine 40 and histidine 43. 6 residues coordinate Zn(2+): histidine 63, glutamate 64, cysteine 93, cysteine 96, cysteine 99, and cysteine 107. NAD(+) contacts are provided by residues isoleucine 175, aspartate 195, arginine 200, 262-264 (LGI), and 286-287 (IY).

Belongs to the zinc-containing alcohol dehydrogenase family. As to quaternary structure, homotetramer. The cofactor is Zn(2+).

It localises to the cytoplasm. It carries out the reaction L-threonine + NAD(+) = (2S)-2-amino-3-oxobutanoate + NADH + H(+). The protein operates within amino-acid degradation; L-threonine degradation via oxydo-reductase pathway; glycine from L-threonine: step 1/2. Its function is as follows. Catalyzes the NAD(+)-dependent oxidation of L-threonine to 2-amino-3-ketobutyrate. The sequence is that of L-threonine 3-dehydrogenase from Shigella dysenteriae serotype 1 (strain Sd197).